A 311-amino-acid chain; its full sequence is Cytosolic Fe-S cluster assembly factor Nubp1 homolog (311 aa).

The interval 1-20 (MQAPPPEHCPGVESENAGKG) is disordered. [4Fe-4S] cluster contacts are provided by Cys-9, Cys-23, Cys-26, and Cys-32. 63–70 (GKGGVGKS) lines the ATP pocket. [4Fe-4S] cluster is bound by residues Cys-240 and Cys-243.

Belongs to the Mrp/NBP35 ATP-binding proteins family. NUBP1/NBP35 subfamily. As to quaternary structure, heterotetramer of 2 Nubp1 and 2 Nubp2 chains. [4Fe-4S] cluster is required as a cofactor.

It localises to the cytoplasm. Component of the cytosolic iron-sulfur (Fe/S) protein assembly (CIA) machinery. Required for maturation of extramitochondrial Fe-S proteins. The Nubp1-Nubp2 heterotetramer forms a Fe-S scaffold complex, mediating the de novo assembly of an Fe-S cluster and its transfer to target apoproteins. The protein is Cytosolic Fe-S cluster assembly factor Nubp1 homolog of Drosophila simulans (Fruit fly).